The following is a 98-amino-acid chain: Large ribosomal subunit protein uL23 (98 aa).

Belongs to the universal ribosomal protein uL23 family. Part of the 50S ribosomal subunit. Contacts protein L29, and trigger factor when it is bound to the ribosome.

One of the early assembly proteins it binds 23S rRNA. One of the proteins that surrounds the polypeptide exit tunnel on the outside of the ribosome. Forms the main docking site for trigger factor binding to the ribosome. This Koribacter versatilis (strain Ellin345) protein is Large ribosomal subunit protein uL23.